A 194-amino-acid chain; its full sequence is Imidazoleglycerol-phosphate dehydratase (194 aa).

The protein belongs to the imidazoleglycerol-phosphate dehydratase family.

The protein resides in the cytoplasm. It catalyses the reaction D-erythro-1-(imidazol-4-yl)glycerol 3-phosphate = 3-(imidazol-4-yl)-2-oxopropyl phosphate + H2O. It functions in the pathway amino-acid biosynthesis; L-histidine biosynthesis; L-histidine from 5-phospho-alpha-D-ribose 1-diphosphate: step 6/9. This Bacillus cereus (strain B4264) protein is Imidazoleglycerol-phosphate dehydratase.